We begin with the raw amino-acid sequence, 591 residues long: V-type ATP synthase alpha chain (591 aa).

Residue 242–249 (GPFGAGKT) coordinates ATP.

It belongs to the ATPase alpha/beta chains family.

The catalysed reaction is ATP + H2O + 4 H(+)(in) = ADP + phosphate + 5 H(+)(out). In terms of biological role, produces ATP from ADP in the presence of a proton gradient across the membrane. The V-type alpha chain is a catalytic subunit. The polypeptide is V-type ATP synthase alpha chain (atpA) (Chlamydia pneumoniae (Chlamydophila pneumoniae)).